A 361-amino-acid polypeptide reads, in one-letter code: Dual specificity mitogen-activated protein kinase kinase 6 (361 aa).

2 stretches are compositionally biased toward basic and acidic residues: residues 1-11 (MEGGSDKESKV) and 37-48 (PKELKLPKEVFE). The disordered stretch occupies residues 1-61 (MEGGSDKESK…PAPTPPRDLD (61 aa)). The segment at 30 to 46 (VRGKKKLPKELKLPKEV) is d domain. The Protein kinase domain occupies 80-341 (LEQIGELGRG…YTELMQHPFF (262 aa)). ATP-binding positions include 86-94 (LGRGAYGVV) and Lys-109. Catalysis depends on Asp-206, which acts as the Proton acceptor. Position 234 is a phosphoserine; by MAPK3 (Ser-234). The residue at position 238 (Thr-238) is a Phosphothreonine; by MAPK3. The tract at residues 338–361 (HPFFTLHDSKDTDVASFVKTILGD) is DVD domain.

It belongs to the protein kinase superfamily. STE Ser/Thr protein kinase family. MAP kinase kinase subfamily. Dimer. Interacts (via its D domain) with its MAP kinase substrates. Interacts (via its DVD domain) with MAP3Ks activators. Post-translationally, weakly autophosphorylated. Phosphorylated at Ser-234 and Thr-238 by the majority of M3Ks.

It localises to the nucleus. The protein localises to the cytoplasm. Its subcellular location is the cytoskeleton. The enzyme catalyses L-seryl-[protein] + ATP = O-phospho-L-seryl-[protein] + ADP + H(+). It carries out the reaction L-threonyl-[protein] + ATP = O-phospho-L-threonyl-[protein] + ADP + H(+). The catalysed reaction is L-tyrosyl-[protein] + ATP = O-phospho-L-tyrosyl-[protein] + ADP + H(+). With respect to regulation, activated by dual phosphorylation on Ser-234 and Thr-238 in response to a variety of cellular stresses, including UV radiation, osmotic shock, hypoxia, inflammatory cytokines, interferon gamma (IFNG), and less often by growth factors. MAP2K6/MKK6 is activated by the majority of M3Ks. Its function is as follows. Dual specificity protein kinase which acts as an essential component of the MAP kinase signal transduction pathway. Catalyzes the concomitant phosphorylation of a threonine and a tyrosine residue in the MAP kinases p38 and plays an important role in the regulation of cellular responses to cytokines and all kinds of stresses. The p38 MAP kinase signal transduction pathway leads to direct activation of transcription factors. Phosphorylation by MAP2K6 asymmetrically activates p38 on one side of the blastodisc, an event which is necessary for blastomere cleavage. This chain is Dual specificity mitogen-activated protein kinase kinase 6, found in Danio rerio (Zebrafish).